The chain runs to 648 residues: MHLSDITHPNQLRNLNLSQLRSLARQIRDKHLQTAANSPVGCHLGPGLGVVELTLALYKTLDLDRDKVIWDVGHQAYAHKMLTGRYHNFHTLRQKGGISGYLKRSESRFDHFGAGHASTSISAALGMAIARDRRGDNFKVVAIIGDGALTGGMAYEAINHAGHLPKTNLMVVLNDNGMSISPNVGAIPRYLNRLRLSPPVQFLADSLEEQLKNLPLLGSSLSPEIDRLKETVKLVTAVQNNKAGIIFEELGFTYVGPVDGHNLAELLDAFELAHGISGPVLVHVATVKGKGYPPAEAEQVGYHAQSRFDLATGKPYPPTKPKPPSYSKVFGHALCKLAERDPRIIGITAAMDTGTGLDKLKEKLPDQFVDVGIAEQHAVTLAAGMACEGMRPVVAIYSTFLQRAYDQIIHDVCIQKLPVFFCLDRAGVVGADGPTHQGMYDIAYLRCIPEMVLMAPKDEAELQRMVVTGIQYTQGPIAMRYPRGSGVGVPLAEEGWEPLPIGKAEVLRSGGEVLILAYGSMVHPSLQAAEILKEHGISATVVNARFAKPLDTELILPLAEQSRLVVTVEEGCLMGGFGSAVAEALLDADLAVPLLRLGVPDVWVEHATPEESLAELGLNSAGIAERIRAKFQARVLKGSPAELPTVNS.

Thiamine diphosphate contacts are provided by residues His-74 and 115-117; that span reads GHA. Asp-146 contacts Mg(2+). Residues 147 to 148, Asn-176, Tyr-292, and Glu-375 each bind thiamine diphosphate; that span reads GA. Asn-176 is a binding site for Mg(2+).

Belongs to the transketolase family. DXPS subfamily. In terms of assembly, homodimer. Mg(2+) serves as cofactor. Requires thiamine diphosphate as cofactor.

It carries out the reaction D-glyceraldehyde 3-phosphate + pyruvate + H(+) = 1-deoxy-D-xylulose 5-phosphate + CO2. It functions in the pathway metabolic intermediate biosynthesis; 1-deoxy-D-xylulose 5-phosphate biosynthesis; 1-deoxy-D-xylulose 5-phosphate from D-glyceraldehyde 3-phosphate and pyruvate: step 1/1. In terms of biological role, catalyzes the acyloin condensation reaction between C atoms 2 and 3 of pyruvate and glyceraldehyde 3-phosphate to yield 1-deoxy-D-xylulose-5-phosphate (DXP). This is 1-deoxy-D-xylulose-5-phosphate synthase from Synechococcus sp. (strain JA-2-3B'a(2-13)) (Cyanobacteria bacterium Yellowstone B-Prime).